We begin with the raw amino-acid sequence, 460 residues long: Bifunctional protein GlmU (460 aa).

The tract at residues 1–230 (MSNNYAIILA…FDESLGVNDR (230 aa)) is pyrophosphorylase. Residues 9-12 (LAAG), K23, Q73, and 78-79 (GT) each bind UDP-N-acetyl-alpha-D-glucosamine. Residue D103 coordinates Mg(2+). UDP-N-acetyl-alpha-D-glucosamine-binding residues include G140, E155, N170, and N228. N228 is a binding site for Mg(2+). Residues 231–251 (VALATAEAVMRKRINEKHMVN) form a linker region. Positions 252–460 (GVTFINPDAT…TRFPFHPSQK (209 aa)) are N-acetyltransferase. 2 residues coordinate UDP-N-acetyl-alpha-D-glucosamine: R333 and K351. The active-site Proton acceptor is H363. UDP-N-acetyl-alpha-D-glucosamine contacts are provided by Y366 and N377. Acetyl-CoA-binding positions include A380, 386 to 387 (NY), S405, A423, and R440.

This sequence in the N-terminal section; belongs to the N-acetylglucosamine-1-phosphate uridyltransferase family. It in the C-terminal section; belongs to the transferase hexapeptide repeat family. Homotrimer. Mg(2+) is required as a cofactor.

The protein localises to the cytoplasm. It carries out the reaction alpha-D-glucosamine 1-phosphate + acetyl-CoA = N-acetyl-alpha-D-glucosamine 1-phosphate + CoA + H(+). The enzyme catalyses N-acetyl-alpha-D-glucosamine 1-phosphate + UTP + H(+) = UDP-N-acetyl-alpha-D-glucosamine + diphosphate. Its pathway is nucleotide-sugar biosynthesis; UDP-N-acetyl-alpha-D-glucosamine biosynthesis; N-acetyl-alpha-D-glucosamine 1-phosphate from alpha-D-glucosamine 6-phosphate (route II): step 2/2. It functions in the pathway nucleotide-sugar biosynthesis; UDP-N-acetyl-alpha-D-glucosamine biosynthesis; UDP-N-acetyl-alpha-D-glucosamine from N-acetyl-alpha-D-glucosamine 1-phosphate: step 1/1. The protein operates within bacterial outer membrane biogenesis; LPS lipid A biosynthesis. Its function is as follows. Catalyzes the last two sequential reactions in the de novo biosynthetic pathway for UDP-N-acetylglucosamine (UDP-GlcNAc). The C-terminal domain catalyzes the transfer of acetyl group from acetyl coenzyme A to glucosamine-1-phosphate (GlcN-1-P) to produce N-acetylglucosamine-1-phosphate (GlcNAc-1-P), which is converted into UDP-GlcNAc by the transfer of uridine 5-monophosphate (from uridine 5-triphosphate), a reaction catalyzed by the N-terminal domain. The chain is Bifunctional protein GlmU from Streptococcus suis (strain 98HAH33).